We begin with the raw amino-acid sequence, 402 residues long: CD2 homolog (402 aa).

The signal sequence occupies residues methionine 1–asparagine 16. Topologically, residues asparagine 17–threonine 204 are extracellular. N-linked (GlcNAc...) asparagine; by host glycosylation is found at asparagine 25, asparagine 37, asparagine 52, asparagine 55, asparagine 72, asparagine 77, asparagine 81, asparagine 89, asparagine 95, asparagine 108, asparagine 125, asparagine 137, asparagine 148, asparagine 153, asparagine 169, asparagine 177, asparagine 184, and asparagine 190. Disulfide bonds link cysteine 126–cysteine 191 and cysteine 133–cysteine 174. A helical transmembrane segment spans residues leucine 205–isoleucine 225. The Cytoplasmic segment spans residues serine 226–isoleucine 402. The segment at valine 238–tyrosine 276 is disordered. A compositionally biased stretch (basic and acidic residues) spans histidine 256 to proline 267. A run of 11 repeats spans residues lysine 302–proline 307, lysine 308–proline 313, lysine 314–proline 319, lysine 320–proline 325, lysine 326–proline 331, lysine 332–proline 337, lysine 338–proline 343, lysine 344–proline 349, lysine 350–proline 355, lysine 356–serine 361, and lysine 362–proline 367. The segment at lysine 302–proline 367 is 11 X 6 AA tandem repeats of K-P-C-[PRS]-[P]-[PS]. Residues proline 319–proline 386 show a composition bias toward pro residues. Residues proline 319–leucine 388 form a disordered region.

This sequence belongs to the asfivirus CD2 homolog protein family. As to quaternary structure, both glycosylated and nonglycosylated forms interact (via C-terminus) with the host AP-1 complex. In terms of processing, cleaved into two fragments of 63 kDa and 26 kDa containing respectively the glycosylated N-terminus and the nonglycosylated C-terminus. A full-length 89-kDa glycosylated form also exists.

Its subcellular location is the host cell membrane. It localises to the virion membrane. The protein localises to the host Golgi apparatus. Functionally, may play an immunosuppressive role by inhibiting lymphocyte proliferation and subsequently facilitating viral replication and generalization of infection. Responsible for viral hemadsorption, which may help viral spread. Increases virus replication in the tick vector at the step of virus uptake or replication in the tick gut. May play a role in the host Golgi reorganization to yield viral factories. May play a role in host cell penetration. This is CD2 homolog from Ornithodoros (relapsing fever ticks).